Reading from the N-terminus, the 494-residue chain is SNF1-related protein kinase catalytic subunit alpha KIN12 (494 aa).

The Protein kinase domain maps to 19-270; the sequence is YRIGKTLGHG…ITEIRQHPWF (252 aa). ATP contacts are provided by residues 25-33 and lysine 48; that span reads LGHGSFAKV. Aspartate 142 functions as the Proton acceptor in the catalytic mechanism. A Phosphothreonine modification is found at threonine 175. The auto-inhibitory domain (AID) stretch occupies residues 289–386; it reads AKKIEEEIIQ…GLKSNVKDDK (98 aa). Residues 291–331 form the UBA domain; sequence KIEEEIIQNVVNIGFDRNHVVDSLANRIQNEATVAYHLILD. Positions 293-494 are regulatory domain (RD); the sequence is EEEIIQNVVN…VAFLRELGVL (202 aa). The segment at 387 to 494 is PPI; sequence TWTLGLQSQG…VAFLRELGVL (108 aa). The region spanning 445-493 is the KA1 domain; the sequence is AIILPTVIKFEIQLYKVREGKYLLDILRIDGPQFIFFDLCVAFLRELGV.

This sequence belongs to the protein kinase superfamily. CAMK Ser/Thr protein kinase family. SNF1 subfamily. In terms of assembly, subunit of a probable heterotrimeric complex consisting of an alpha catalytic subunit, and a beta (KINB) and a gamma (KING or SNF4) non-catalytic regulatory subunits. Autophosphorylated. In terms of tissue distribution, expressed at very low levels.

The enzyme catalyses L-seryl-[protein] + ATP = O-phospho-L-seryl-[protein] + ADP + H(+). The catalysed reaction is L-threonyl-[protein] + ATP = O-phospho-L-threonyl-[protein] + ADP + H(+). With respect to regulation, activated by phosphorylation at Thr-175. In terms of biological role, catalytic subunit of the probable trimeric SNF1-related protein kinase (SnRK) complex, a central regulator of cellular energy homeostasis, which, in response to seemingly unrelated darkness, sugar and stress conditions, activates energy-producing pathways and inhibits energy-consuming processes. May also be involved in the regulation of fatty acid synthesis by phosphorylation of acetyl-CoA carboxylase and in assimilation of nitrogen by phosphorylating nitrate reductase. This chain is SNF1-related protein kinase catalytic subunit alpha KIN12, found in Arabidopsis thaliana (Mouse-ear cress).